Here is a 351-residue protein sequence, read N- to C-terminus: UDP-3-O-acylglucosamine N-acyltransferase 1 (351 aa).

The Proton acceptor role is filled by histidine 237.

Belongs to the transferase hexapeptide repeat family. LpxD subfamily. Homotrimer.

It catalyses the reaction a UDP-3-O-[(3R)-3-hydroxyacyl]-alpha-D-glucosamine + a (3R)-hydroxyacyl-[ACP] = a UDP-2-N,3-O-bis[(3R)-3-hydroxyacyl]-alpha-D-glucosamine + holo-[ACP] + H(+). The protein operates within bacterial outer membrane biogenesis; LPS lipid A biosynthesis. In terms of biological role, catalyzes the N-acylation of UDP-3-O-acylglucosamine using 3-hydroxyacyl-ACP as the acyl donor. Is involved in the biosynthesis of lipid A, a phosphorylated glycolipid that anchors the lipopolysaccharide to the outer membrane of the cell. The polypeptide is UDP-3-O-acylglucosamine N-acyltransferase 1 (Legionella pneumophila (strain Paris)).